Here is a 77-residue protein sequence, read N- to C-terminus: Large ribosomal subunit protein bL31 (77 aa).

It belongs to the bacterial ribosomal protein bL31 family. Type A subfamily. In terms of assembly, part of the 50S ribosomal subunit.

In terms of biological role, binds the 23S rRNA. In Paramagnetospirillum magneticum (strain ATCC 700264 / AMB-1) (Magnetospirillum magneticum), this protein is Large ribosomal subunit protein bL31.